The following is a 985-amino-acid chain: Ankyrin repeat domain-containing protein 24 (985 aa).

ANK repeat units follow at residues 52–81, 85–114, 118–147, 151–180, and 184–213; these read EGKSAFHLAAMRGAAGCLEVMLAQGADVMS, AGYNALHLAAKYGHPECLKQLLEASCVVDI, SGWTALHHAAAGGCLSCSKLLCSFKAHMNP, SGATPLIIAAQMCHTDLCRLLLQQGAATND, and QGRTALMLACEGGSPETVEVLLQGGAQLSI. 5 disordered regions span residues 243 to 293, 311 to 360, 386 to 412, 476 to 503, and 594 to 614; these read RSSP…DRDA, IRGL…LGRE, QDEEGEMPDFPGADALMPKNQSPSAEE, YTEAMHSQQQQQEGEPPRAQEGEETAYQ, and DNAESEPVAAEDTGGKENPGM. The stretch at 291-488 forms a coiled coil; it reads RDAYEEIVRL…AMHSQQQQQE (198 aa). Basic and acidic residues-rich tracts occupy residues 311–326 and 349–360; these read IRGLEQHKERRRKEPL and EKQEEKESLGRE.

In terms of assembly, homodimer. Interacts (via C-terminal domain) with TRIOBP (via C-terminal domain) isoform 4; recruits TRIOBP isoform 4 to stereocilia rootlets. In terms of tissue distribution, expressed in vestibular hair bundles.

It is found in the cell membrane. It localises to the cell projection. The protein resides in the stereocilium. Its function is as follows. Component of the stereocilia rootlet in hair cells of inner ear. Bridges the apical plasma membrane with the lower rootlet and maintains normal distribution of TRIOBP, thereby reinforcing stereocilia insertion points and organizing rootlets for hearing with long-term resilience. The sequence is that of Ankyrin repeat domain-containing protein 24 (Ankrd24) from Mus musculus (Mouse).